The following is a 501-amino-acid chain: O-phosphoseryl-tRNA(Sec) selenium transferase (501 aa).

A tetramerization region spans residues 1–44 (MNRESFAAGERLVSPAYVRQGCEARRSHEHLIRLLLEKGKCPEN). Phosphoserine is present on Ser-14. Arg-75 serves as a coordination point for pyridoxal 5'-phosphate. Residues 96–106 (GRSGDISAVQP) are phosphate loop (P-loop). Residues Arg-97, Ser-98, and Gln-105 each coordinate substrate. Arg-271 contacts tRNA. Residue Lys-284 is modified to N6-(pyridoxal phosphate)lysine. Arg-313 is a substrate binding site. Positions 398 and 463 each coordinate tRNA. An SLA/LP epitope region spans residues 474-493 (DKTEDVDIEEMALKLDNVLL).

Belongs to the SepSecS family. Homotetramer formed by a catalytic dimer and a non-catalytic dimer serving as a binding platform that orients tRNASec for catalysis. Each tetramer binds the CCA ends of two tRNAs which point to the active sites of the catalytic dimer. Requires pyridoxal 5'-phosphate as cofactor. Primarily expressed in liver, pancreas, kidney and lung. Overexpressed in PHA-stimulated T-cells.

It localises to the cytoplasm. The enzyme catalyses O-phospho-L-seryl-tRNA(Sec) + selenophosphate + H2O = L-selenocysteinyl-tRNA(Sec) + 2 phosphate. It participates in aminoacyl-tRNA biosynthesis; selenocysteinyl-tRNA(Sec) biosynthesis; selenocysteinyl-tRNA(Sec) from L-seryl-tRNA(Sec) (archaeal/eukaryal route): step 2/2. Converts O-phosphoseryl-tRNA(Sec) to selenocysteinyl-tRNA(Sec) required for selenoprotein biosynthesis. The sequence is that of O-phosphoseryl-tRNA(Sec) selenium transferase (SEPSECS) from Homo sapiens (Human).